Consider the following 849-residue polypeptide: Putative pentatricopeptide repeat-containing protein At5g08490 (849 aa).

PPR repeat units follow at residues 20-54 (DHRV…GHIA), 55-89 (CSEV…DPVV), 121-155 (SSVT…GLEK), 156-187 (DTLV…IADK), 188-222 (DVVS…PTEP), 223-260 (NYAT…SWLQ), 262-296 (HVFV…DLVS), 297-327 (WNVV…GDVS), 329-363 (DSVT…SYLL), 365-399 (DTSV…DIIS), 400-430 (WNAI…AITL), 431-465 (DSVT…GLLH), 469-499 (EPKL…LSER), 501-531 (TLVS…MSTT), 532-566 (DLTT…GMRP), 567-597 (NTVT…IIRG), 601-631 (DIRL…DARR), 632-666 (DLVM…NIKP), 667-702 (DHVF…GMKP), and 703-733 (TMEQ…MPVE). Positions 738–813 (IWGTLLRACT…PAGCSWLEVD (76 aa)) are type E motif. A type E(+) motif region spans residues 814-844 (GQRNVFVSGDCSHPRRDSIFDLVNALYLQMK).

Belongs to the PPR family. PCMP-E subfamily.

The polypeptide is Putative pentatricopeptide repeat-containing protein At5g08490 (PCMP-E32) (Arabidopsis thaliana (Mouse-ear cress)).